The primary structure comprises 380 residues: 1-deoxy-D-xylulose 5-phosphate reductoisomerase (380 aa).

NADPH is bound by residues threonine 10, glycine 11, serine 12, isoleucine 13, glycine 35, and asparagine 121. Residue lysine 122 coordinates 1-deoxy-D-xylulose 5-phosphate. Position 123 (glutamate 123) interacts with NADPH. Aspartate 147 serves as a coordination point for Mn(2+). 1-deoxy-D-xylulose 5-phosphate contacts are provided by serine 148, glutamate 149, serine 173, and histidine 196. Glutamate 149 lines the Mn(2+) pocket. Glycine 202 provides a ligand contact to NADPH. 4 residues coordinate 1-deoxy-D-xylulose 5-phosphate: serine 209, asparagine 214, lysine 215, and glutamate 218. Mn(2+) is bound at residue glutamate 218.

Belongs to the DXR family. Requires Mg(2+) as cofactor. It depends on Mn(2+) as a cofactor.

It carries out the reaction 2-C-methyl-D-erythritol 4-phosphate + NADP(+) = 1-deoxy-D-xylulose 5-phosphate + NADPH + H(+). It participates in isoprenoid biosynthesis; isopentenyl diphosphate biosynthesis via DXP pathway; isopentenyl diphosphate from 1-deoxy-D-xylulose 5-phosphate: step 1/6. Its function is as follows. Catalyzes the NADPH-dependent rearrangement and reduction of 1-deoxy-D-xylulose-5-phosphate (DXP) to 2-C-methyl-D-erythritol 4-phosphate (MEP). This is 1-deoxy-D-xylulose 5-phosphate reductoisomerase from Lachnospira eligens (strain ATCC 27750 / DSM 3376 / VPI C15-48 / C15-B4) (Eubacterium eligens).